The primary structure comprises 497 residues: Angiopoietin-1 (497 aa).

Positions 1 to 19 are cleaved as a signal peptide; sequence MTVFLSFAFLAAILTHIGC. Asparagine 92, asparagine 122, asparagine 154, asparagine 243, and asparagine 294 each carry an N-linked (GlcNAc...) asparagine glycan. Positions 158–256 form a coiled coil; it reads RLEIQLLENS…LQKQQLELMD (99 aa). The 221-residue stretch at 276–496 folds into the Fibrinogen C-terminal domain; it reads KEEEKPFRDC…STTMMIRPLD (221 aa). 2 cysteine pairs are disulfide-bonded: cysteine 285–cysteine 314 and cysteine 438–cysteine 451.

As to quaternary structure, homooligomer. Interacts with TEK/TIE2. Interacts with SVEP1/polydom. Interacts with THBD; this interaction significantly inhibits the generation of activated PC and TAFIa/CPB2 by the thrombin/thrombomodulin complex.

It localises to the secreted. In terms of biological role, binds and activates TIE2 receptor by inducing its tyrosine phosphorylation. Implicated in endothelial developmental processes later and distinct from that of VEGF. Appears to play a crucial role in mediating reciprocal interactions between the endothelium and surrounding matrix and mesenchyme. Mediates blood vessel maturation/stability. It may play an important role in the heart early development. The polypeptide is Angiopoietin-1 (ANGPT1) (Canis lupus familiaris (Dog)).